Reading from the N-terminus, the 77-residue chain is U8-lycotoxin-Ls1s (77 aa).

A signal peptide spans 1-20; the sequence is MKLIIFTGLVLFAIVSLIEA. The propeptide occupies 21–26; the sequence is QAENER.

This sequence belongs to the neurotoxin 19 (CSTX) family. 08 (U8-Lctx) subfamily. In terms of processing, contains 4 disulfide bonds. As to expression, expressed by the venom gland.

The protein resides in the secreted. In Lycosa singoriensis (Wolf spider), this protein is U8-lycotoxin-Ls1s.